The primary structure comprises 138 residues: Acidic phospholipase A2 jerdoxin (138 aa).

Residues 1–16 form the signal peptide; it reads MRTLWIMAVLLVGVEG. Cystine bridges form between Cys42–Cys131, Cys44–Cys60, Cys59–Cys111, Cys65–Cys138, Cys66–Cys104, Cys73–Cys97, and Cys91–Cys102. 3 residues coordinate Ca(2+): Tyr43, Gly45, and Gly47. His63 is a catalytic residue. Asp64 lines the Ca(2+) pocket. Residue Asp105 is part of the active site.

Belongs to the phospholipase A2 family. Group II subfamily. D49 sub-subfamily. As to quaternary structure, monomer. Requires Ca(2+) as cofactor. In terms of tissue distribution, expressed by the venom gland.

Its subcellular location is the secreted. It carries out the reaction a 1,2-diacyl-sn-glycero-3-phosphocholine + H2O = a 1-acyl-sn-glycero-3-phosphocholine + a fatty acid + H(+). Snake venom phospholipase A2 (PLA2) that displays edema-inducing activities, exhibits indirect hemolytic activity, and inhibits ADP-induced platelet aggregation. PLA2 catalyzes the calcium-dependent hydrolysis of the 2-acyl groups in 3-sn-phosphoglycerides. The chain is Acidic phospholipase A2 jerdoxin from Protobothrops jerdonii (Jerdon's pitviper).